A 32-amino-acid polypeptide reads, in one-letter code: uncharacterized protein (32 aa).

This is an uncharacterized protein from Treponema pallidum (strain Nichols).